The sequence spans 247 residues: Carboxy-S-adenosyl-L-methionine synthase (247 aa).

Residues tyrosine 40, 65 to 67, 90 to 91, 122 to 123, asparagine 137, and arginine 204 contribute to the S-adenosyl-L-methionine site; these read GSS, DN, and DI.

It belongs to the class I-like SAM-binding methyltransferase superfamily. Cx-SAM synthase family. Homodimer.

The enzyme catalyses prephenate + S-adenosyl-L-methionine = carboxy-S-adenosyl-L-methionine + 3-phenylpyruvate + H2O. Catalyzes the conversion of S-adenosyl-L-methionine (SAM) to carboxy-S-adenosyl-L-methionine (Cx-SAM). This Pseudomonas fluorescens (strain SBW25) protein is Carboxy-S-adenosyl-L-methionine synthase.